Reading from the N-terminus, the 467-residue chain is MSKVADALKLMKDEEVEYVDIRFTDPRGKLQHVTLVADLVDEDFFEEGFMFDGSSIAGWKSIDQSDMKLIPDAGSVYIDPFYAEKTLCVHCNVVEPDTGEAYSRDPRGAAVKAEAYLKASGIGDVAYFGPEAEFFIFDDVRYSVTPAKVAYQIDADAGAWNTDSEYEMGNLAHRAGHKGGYFPVNPIDEAQDLRGEMLSTMKRMGMKVDKHHHEVATCQHELGLIFGGLTEQADNILKYKYVIHNVAGMHGKTVTFMPKPMKGDNGSGMHVNMSIWKEQALFAGDKYADLSQEALWFIGGILKQPSVNALTNPATNSYKRLIPGFEAPVLRAYSARNRSGCVRIPWTESPNAKRVEARFPDPSANPYLAFAALLMAGLDGIKNKIDPGPASDKDLYDLPPEELAAIPTVCGSLREALEELEKDHDFLLAGDVFTKDQLEGYMALKWEEVYAYEHTPHPVEYQMYYSC.

Residues 14 to 98 (EEVEYVDIRF…VHCNVVEPDT (85 aa)) enclose the GS beta-grasp domain. A GS catalytic domain is found at 106–467 (PRGAAVKAEA…PVEYQMYYSC (362 aa)). Residues Glu131 and Glu133 each coordinate Mg(2+). An ATP-binding site is contributed by Asp209. The Mg(2+) site is built by Glu214 and Glu221. Residues 265–266 (NG) and Gly266 each bind L-glutamate. His270 lines the Mg(2+) pocket. Residues 272–274 (NMS) and Ser274 each bind ATP. Positions 320, 326, and 338 each coordinate L-glutamate. Residues Arg338 and Arg343 each contribute to the ATP site. Glu356 provides a ligand contact to Mg(2+). Arg358 lines the L-glutamate pocket. An O-AMP-tyrosine modification is found at Tyr396.

This sequence belongs to the glutamine synthetase family. Oligomer of 12 subunits arranged in the form of two hexameric ring. Requires Mg(2+) as cofactor.

It localises to the cytoplasm. It catalyses the reaction L-glutamate + NH4(+) + ATP = L-glutamine + ADP + phosphate + H(+). With respect to regulation, the activity of this enzyme could be controlled by adenylation under conditions of abundant glutamine. Functionally, catalyzes the ATP-dependent biosynthesis of glutamine from glutamate and ammonia. This chain is Glutamine synthetase, found in Cereibacter sphaeroides (Rhodobacter sphaeroides).